An 84-amino-acid chain; its full sequence is Large ribosomal subunit protein bL27 (84 aa).

This sequence belongs to the bacterial ribosomal protein bL27 family.

The chain is Large ribosomal subunit protein bL27 from Karelsulcia muelleri (strain GWSS) (Sulcia muelleri).